A 314-amino-acid chain; its full sequence is MTISRTPKFSAGELNVYSAPADVAAVTRALRTAGRRIVLVPTMGALHEGHLTLVRAAKRTPGAVVVVSIFVNPLQFGPNEDLNAYPRTLEDDLTALRAEGVEIVFTPTGSDMYPDGTRTSVHPGPLGDDLEGSSRPGHFAGVLTVVLKLFSIVRPDRAYFGEKDYQQLTLLRQMVADLNVDVQIVGVPTVRESDGLALSSRNRYLDKDQREQAGALSAALLAGKYAAAGGAEAALDAARAVLDEVPALEVDYLQVRDPMLGPAPAEGQARLLVAARLGRTRLIDNIAIDVGASAGIDGHPRVGNDQNHELPWRN.

Methionine 43–histidine 50 is a binding site for ATP. The Proton donor role is filled by histidine 50. Glutamine 75 contacts (R)-pantoate. Residue glutamine 75 coordinates beta-alanine. The segment at methionine 112–glutamate 131 is disordered. Residue glycine 161–aspartate 164 coordinates ATP. Glutamine 167 is a binding site for (R)-pantoate. Residues valine 190 and leucine 198–arginine 201 contribute to the ATP site.

It belongs to the pantothenate synthetase family. As to quaternary structure, homodimer.

It localises to the cytoplasm. The catalysed reaction is (R)-pantoate + beta-alanine + ATP = (R)-pantothenate + AMP + diphosphate + H(+). Its pathway is cofactor biosynthesis; (R)-pantothenate biosynthesis; (R)-pantothenate from (R)-pantoate and beta-alanine: step 1/1. In terms of biological role, catalyzes the condensation of pantoate with beta-alanine in an ATP-dependent reaction via a pantoyl-adenylate intermediate. This is Pantothenate synthetase from Mycolicibacterium smegmatis (strain ATCC 700084 / mc(2)155) (Mycobacterium smegmatis).